We begin with the raw amino-acid sequence, 197 residues long: Protein tyrosine phosphatase receptor type C-associated protein (197 aa).

The chain crosses the membrane as a helical span at residues 33–53 (VVTIVLLLLLLLLLVTALALA). Phosphoserine is present on residues Ser-99 and Ser-103. 2 disordered regions span residues 120-164 (GPEE…GSSA) and 177-197 (SAAW…VTAL). Over residues 124 to 145 (AAAKEEEQRCQAEQTRDPRDTD) the composition is skewed to basic and acidic residues.

As to quaternary structure, interacts with CD45/PTPRC. Post-translationally, phosphorylated on tyrosine residues. In terms of tissue distribution, leukocyte-specific. Expressed in B- and T-cell lines, in spleen, thymus, and bone marrow of adult mice, and in embryos.

Its subcellular location is the membrane. This is Protein tyrosine phosphatase receptor type C-associated protein (Ptprcap) from Mus musculus (Mouse).